The sequence spans 286 residues: PTS system mannose-specific EIID component (286 aa).

At Met-1 the chain carries N-formylmethionine. The Cytoplasmic portion of the chain corresponds to 1-17 (MSEMVDTTQTTTEKKLT). The 271-residue stretch at 14-284 (KKLTQSDIRG…GIAGYACGLL (271 aa)) folds into the PTS EIID domain. The stretch at 18–55 (QSDIRGVFLRSNLFQGSWNFERMQALGFCFSMVPAIRR) is an intramembrane region. Residues 56 to 62 (LYPENNE) lie on the Cytoplasmic side of the membrane. The stretch at 63-95 (ARKQAIRRHLEFFNTQPFVAAPILGVTLALEEQ) is an intramembrane region. Topologically, residues 96–103 (RANGAEID) are cytoplasmic. The hydrophobic stretch at 104–143 (DGAINGIKVGLMGPLAGVGDPIFWGTVRPVFAALGAGIAM) threads the membrane. Residues 144–147 (SGSL) lie on the Periplasmic side of the membrane. A membrane pass occupies residues 148–176 (LGPLLFFILFNLVRLATRYYGVAYGYSKG). Residues 177-186 (IDIVKDMGGG) are Cytoplasmic-facing. The segment at 187 to 212 (FLQKLTEGASILGLFVMGALVNKWTH) is a transmembrane helix. Topologically, residues 213–244 (VNIPLVVSRITDQTGKEHVTTVQTILDQLMPG) are periplasmic. A transmembrane helix spans residues 245 to 258 (LVPLLLTFACMWLL). Topologically, residues 259-264 (RKKVNP) are cytoplasmic. The chain crosses the lipid bilayer at residues 265–283 (LWIIVGFFVIGIAGYACGL). Topologically, residues 284-286 (LGL) are periplasmic.

As to quaternary structure, homotrimer of protomers that are composed of two subunits, IIC and IID.

It localises to the cell inner membrane. The phosphoenolpyruvate-dependent sugar phosphotransferase system (sugar PTS), a major carbohydrate active transport system, catalyzes the phosphorylation of incoming sugar substrates concomitantly with their translocation across the cell membrane. The enzyme II ManXYZ PTS system is involved in mannose transport. This chain is PTS system mannose-specific EIID component (manZ), found in Escherichia coli O6:H1 (strain CFT073 / ATCC 700928 / UPEC).